The following is a 476-amino-acid chain: Aspartyl/glutamyl-tRNA(Asn/Gln) amidotransferase subunit B (476 aa).

The protein belongs to the GatB/GatE family. GatB subfamily. In terms of assembly, heterotrimer of A, B and C subunits.

It carries out the reaction L-glutamyl-tRNA(Gln) + L-glutamine + ATP + H2O = L-glutaminyl-tRNA(Gln) + L-glutamate + ADP + phosphate + H(+). It catalyses the reaction L-aspartyl-tRNA(Asn) + L-glutamine + ATP + H2O = L-asparaginyl-tRNA(Asn) + L-glutamate + ADP + phosphate + 2 H(+). In terms of biological role, allows the formation of correctly charged Asn-tRNA(Asn) or Gln-tRNA(Gln) through the transamidation of misacylated Asp-tRNA(Asn) or Glu-tRNA(Gln) in organisms which lack either or both of asparaginyl-tRNA or glutaminyl-tRNA synthetases. The reaction takes place in the presence of glutamine and ATP through an activated phospho-Asp-tRNA(Asn) or phospho-Glu-tRNA(Gln). This Listeria monocytogenes serovar 1/2a (strain ATCC BAA-679 / EGD-e) protein is Aspartyl/glutamyl-tRNA(Asn/Gln) amidotransferase subunit B.